The primary structure comprises 347 residues: GMP reductase (347 aa).

Ala-108 to Ala-131 lines the NADP(+) pocket. The K(+) site is built by Gly-181 and Gly-183. Cys-186 functions as the Thioimidate intermediate in the catalytic mechanism. Ile-216–Val-239 is a binding site for NADP(+).

The protein belongs to the IMPDH/GMPR family. GuaC type 1 subfamily. Homotetramer.

The enzyme catalyses IMP + NH4(+) + NADP(+) = GMP + NADPH + 2 H(+). In terms of biological role, catalyzes the irreversible NADPH-dependent deamination of GMP to IMP. It functions in the conversion of nucleobase, nucleoside and nucleotide derivatives of G to A nucleotides, and in maintaining the intracellular balance of A and G nucleotides. This chain is GMP reductase, found in Klebsiella pneumoniae subsp. pneumoniae (strain ATCC 700721 / MGH 78578).